Here is an 89-residue protein sequence, read N- to C-terminus: Small ribosomal subunit protein bS20 (89 aa).

2 disordered regions span residues 1-25 (MANI…ASMK) and 69-89 (KNAA…IQAS). Residues 7–20 (AIKRAKTSEKRRAH) show a composition bias toward basic residues.

This sequence belongs to the bacterial ribosomal protein bS20 family.

Functionally, binds directly to 16S ribosomal RNA. The polypeptide is Small ribosomal subunit protein bS20 (Geobacillus thermodenitrificans (strain NG80-2)).